The chain runs to 81 residues: MNVEHEVSLLIDEIRRLGSKNADGKTSVKFGVLFNDDQCANLFEALVGTLKAAKRKKVITFDGELLLQGVHDNVDVVLLQD.

The protein belongs to the costars family.

The protein is Costars family protein ABRACL (abracl) of Danio rerio (Zebrafish).